A 313-amino-acid polypeptide reads, in one-letter code: Hsp90 co-chaperone Cdc37-like 1 (313 aa).

It belongs to the CDC37 family. As to quaternary structure, forms complexes with Hsp70 and Hsp90.

The protein localises to the cytoplasm. In terms of biological role, co-chaperone that binds to numerous proteins and promotes their interaction with Hsp70 and Hsp90. This chain is Hsp90 co-chaperone Cdc37-like 1 (cdc37l1), found in Danio rerio (Zebrafish).